A 457-amino-acid polypeptide reads, in one-letter code: MREIVHIQAGQCGNQIGAKFWEVISEEHGIDSSGAYNGTSDLQLDRAEVYYNEGSGGRYVPRAVLVDLEPGVLDTIKAGPHGGLYRPDNFVAGQSGAGNNWAKGHYTEGAELVDSVLDVVRREAEGCDCLQGFQVTHSLGGGTGSGMGTLLVSKIREEFPDRMMCTYSVMPSPKVSDTVVEPYNCTLSVHQLVENADAVFCIDNEALYNICYNTLKKPEPAYPDLNKLVSGVMSGITSSLRFPGQLNSDLRKLAVNLVPFPRLHFFMIGYAPLSADGVTAYRAKTVADLTKQMFDPKNMMADCDPRNGRYLTASAYFRGHVSTKEVEEQMDAIQTKNSGQFIDWIPNAIKASVCDVAPTGETMSAAFIGNSTAIQDIFKRVGSHFSAMFKRKAFLHWYTGEGMDEMEFTEAESNMNDLVSELQQYEAATVEGEEEEDAYAEGAVVNGDQSYEDQYAA.

Residues Q11, E69, S138, G142, T143, G144, N204, and N226 each coordinate GTP. E69 contributes to the Mg(2+) binding site. Residues 431-457 (EGEEEEDAYAEGAVVNGDQSYEDQYAA) are disordered.

The protein belongs to the tubulin family. In terms of assembly, dimer of alpha and beta chains. A typical microtubule is a hollow water-filled tube with an outer diameter of 25 nm and an inner diameter of 15 nM. Alpha-beta heterodimers associate head-to-tail to form protofilaments running lengthwise along the microtubule wall with the beta-tubulin subunit facing the microtubule plus end conferring a structural polarity. Microtubules usually have 13 protofilaments but different protofilament numbers can be found in some organisms and specialized cells. The cofactor is Mg(2+).

It is found in the cytoplasm. The protein resides in the cytoskeleton. In terms of biological role, tubulin is the major constituent of microtubules, a cylinder consisting of laterally associated linear protofilaments composed of alpha- and beta-tubulin heterodimers. Microtubules grow by the addition of GTP-tubulin dimers to the microtubule end, where a stabilizing cap forms. Below the cap, tubulin dimers are in GDP-bound state, owing to GTPase activity of alpha-tubulin. In Porphyra purpurea (Red seaweed), this protein is Tubulin beta chain (TUBB1).